The primary structure comprises 892 residues: Phenylalanine--tRNA ligase beta subunit (892 aa).

In terms of domain architecture, tRNA-binding spans 39 to 150 (NPGVEGVVVG…PGLEPGMDVA (112 aa)). A B5 domain is found at 406–569 (AVPPVILLRT…RCEGYDAIPL (164 aa)). An insert region spans residues 442–518 (VLTPADLAAD…ALLGGGESDG (77 aa)). Mg(2+) is bound by residues Asp547, Asp553, Glu556, and Glu557. The FDX-ACB domain occupies 799 to 891 (PRFPAVTRDV…ALKALGAELR (93 aa)).

It belongs to the phenylalanyl-tRNA synthetase beta subunit family. Type 1 subfamily. Tetramer of two alpha and two beta subunits. Mg(2+) is required as a cofactor.

Its subcellular location is the cytoplasm. The catalysed reaction is tRNA(Phe) + L-phenylalanine + ATP = L-phenylalanyl-tRNA(Phe) + AMP + diphosphate + H(+). This chain is Phenylalanine--tRNA ligase beta subunit, found in Symbiobacterium thermophilum (strain DSM 24528 / JCM 14929 / IAM 14863 / T).